A 37-amino-acid polypeptide reads, in one-letter code: Desulforedoxin (37 aa).

Fe cation is bound by residues Cys10, Cys13, Cys29, and Cys30.

To the N-terminal section of desulfoferrodoxin. As to quaternary structure, homodimer. Fe cation is required as a cofactor.

Nonheme iron protein possibly involved in electron transport. The protein is Desulforedoxin (dsr) of Megalodesulfovibrio gigas (Desulfovibrio gigas).